The following is a 262-amino-acid chain: Ribose-5-phosphate isomerase A (262 aa).

Substrate-binding positions include 33-36, 89-92, and 102-105; these read TGST, DGAD, and KGGG. Glu-111 (proton acceptor) is an active-site residue. Residue Lys-129 participates in substrate binding.

This sequence belongs to the ribose 5-phosphate isomerase family. As to quaternary structure, homodimer.

It catalyses the reaction aldehydo-D-ribose 5-phosphate = D-ribulose 5-phosphate. Its pathway is carbohydrate degradation; pentose phosphate pathway; D-ribose 5-phosphate from D-ribulose 5-phosphate (non-oxidative stage): step 1/1. Catalyzes the reversible conversion of ribose-5-phosphate to ribulose 5-phosphate. In Cereibacter sphaeroides (strain KD131 / KCTC 12085) (Rhodobacter sphaeroides), this protein is Ribose-5-phosphate isomerase A.